The chain runs to 115 residues: Disintegrin EC6 subunit alpha (115 aa).

The first 20 residues, 1 to 20 (MIQVLLVIICLAVFPYQGSS), serve as a signal peptide directing secretion. A propeptide spanning residues 21 to 47 (IILESGNINDYEIVYPKKVAVLPTGAM) is cleaved from the precursor. The 65-residue stretch at 48–112 (NSVHPCCDPV…DCPRNRYKGK (65 aa)) folds into the Disintegrin domain. Disulfide bonds link Cys53–Cys76, Cys67–Cys73, Cys72–Cys97, and Cys85–Cys104. Residues 89–91 (MLD) carry the Cell attachment site; atypical (MLD) motif.

This sequence belongs to the disintegrin family. Dimeric disintegrin subfamily. As to quaternary structure, heterodimer with subunit beta; disulfide-linked. In terms of tissue distribution, expressed by the venom gland.

It localises to the secreted. Its function is as follows. Potently inhibits adhesion of alpha-4/beta-1 (ITGA4/ITGB1) and alpha-9/beta-1 (ITGA9/ITGB1) integrins to VCAM1, and adhesion of alpha-5/beta-1 (ITGA5/ITGB1) integrin to fibronectin. Has a much less effect on alpha-IIb/beta-3 (ITGA2B/ITGB3) integrin. Also potently inhibits neutrophil migration across TNF-alpha-activated human umbilical endothelial cells. In Echis carinatus sochureki (Saw-scaled viper), this protein is Disintegrin EC6 subunit alpha.